We begin with the raw amino-acid sequence, 219 residues long: C-type lectin domain family 4 member E (219 aa).

At 1 to 19 (MNSSKSSETQCTERGCFSS) the chain is on the cytoplasmic side. Residues 20 to 40 (QMFLWTVAGIPILFLSACFIT) form a helical; Signal-anchor for type II membrane protein membrane-spanning segment. Residues 41 to 219 (RCVVTFRIFQ…INPLNKGKSL (179 aa)) are Extracellular-facing. Asn62 carries N-linked (GlcNAc...) asparagine glycosylation. A disulfide bridge links Cys80 with Cys91. Residues 87-206 (FQSSCYFFST…CFLNYFRICE (120 aa)) enclose the C-type lectin domain. An N-linked (GlcNAc...) asparagine glycan is attached at Asn107. Intrachain disulfides connect Cys108-Cys205 and Cys179-Cys197. Val117, Asn119, Glu123, Glu169, Asn171, Asn193, Asp194, and Glu206 together coordinate Ca(2+). Positions 169 to 171 (EPN) match the Confers specificity for glucose/mannose-type carbohydrates motif.

In terms of assembly, monomer and homodimer. Interacts with signaling adapter Fc receptor gamma chain/FCER1G to form a functional complex; the interaction is direct. Alternatively, acts as a bridge for interaction between CLEC4D and FCER1G. A heterodimer of CLEC4E and CLEC4D associates with FCER1G to form a functional complex. Interacts with SAP130 nuclear protein that is released from necrotic cells; the interaction is direct. As to expression, expressed in monocytes and macrophages.

It is found in the cell membrane. The protein resides in the cell projection. The protein localises to the phagocytic cup. In terms of biological role, calcium-dependent lectin that acts as a pattern recognition receptor (PRR) of the innate immune system: recognizes damage-associated molecular patterns (DAMPs) of abnormal self and pathogen-associated molecular patterns (PAMPs) of bacteria and fungi. The PAMPs notably include mycobacterial trehalose 6,6'-dimycolate (TDM), a cell wall glycolipid with potent adjuvant immunomodulatory functions. Interacts with signaling adapter Fc receptor gamma chain/FCER1G to form a functional complex in myeloid cells. Binding of mycobacterial trehalose 6,6'-dimycolate (TDM) to this receptor complex leads to phosphorylation of the immunoreceptor tyrosine-based activation motif (ITAM) of FCER1G, triggering activation of SYK, CARD9 and NF-kappa-B, consequently driving maturation of antigen-presenting cells and shaping antigen-specific priming of T-cells toward effector T-helper 1 and T-helper 17 cell subtypes. Also recognizes alpha-mannose residues on pathogenic fungi of the genus Malassezia and mediates macrophage activation. Through recognition of DAMPs released upon nonhomeostatic cell death, enables immune sensing of damaged self and promotes inflammatory cell infiltration into the damaged tissue. This chain is C-type lectin domain family 4 member E, found in Homo sapiens (Human).